The sequence spans 403 residues: Probable eukaryotic initiation factor 4A (403 aa).

A disordered region spans residues 1–29 (MAQNDKIAPQDQDSFLDDQPGVRPIPSFD). The short motif at 26 to 54 (PSFDDMPLHQNLLRGIYSYGFEKPSSIQQ) is the Q motif element. The Helicase ATP-binding domain maps to 57–230 (IAPFTRGGDI…KKFMRDPVRI (174 aa)). 70-77 (AQSGTGKT) is an ATP binding site. A DEAD box motif is present at residues 178–181 (DEAD). The Helicase C-terminal domain maps to 241–401 (GIKQFFIAVE…ELPVDFAAYL (161 aa)).

It belongs to the DEAD box helicase family. eIF4A subfamily. As to quaternary structure, eIF4F is a multi-subunit complex, the composition of which varies with external and internal environmental conditions. It is composed of at least EIF4A, EIF4E and EIF4G.

It carries out the reaction ATP + H2O = ADP + phosphate + H(+). In terms of biological role, ATP-dependent RNA helicase which is a subunit of the eIF4F complex involved in cap recognition and is required for mRNA binding to ribosome. In the current model of translation initiation, eIF4A unwinds RNA secondary structures in the 5'-UTR of mRNAs which is necessary to allow efficient binding of the small ribosomal subunit, and subsequent scanning for the initiator codon. This chain is Probable eukaryotic initiation factor 4A, found in Leishmania infantum.